The following is a 671-amino-acid chain: Probable potassium transport system protein Kup (671 aa).

The tract at residues 1–43 is disordered; that stretch reads MSQIPSPNDPASTGAAPSSAAVPAGPSATPAPSPTAGFSLPGH. The segment covering 10 to 37 has biased composition (low complexity); that stretch reads PASTGAAPSSAAVPAGPSATPAPSPTAG. Transmembrane regions (helical) follow at residues 52 to 72, 92 to 112, 147 to 167, 181 to 201, 209 to 229, 255 to 275, 291 to 311, 323 to 343, 381 to 401, 407 to 427, 441 to 461, and 465 to 485; these read LAALAVGALGVVYGDIGTSPL, VLGVLSLVFWAMTFVVTFKYM, LMLGLFGAALLYGDGIITPAI, PAMERAVVPATVVILVFLFLF, VGAVFGPVMLVWFATIAVLGV, GWHGFLVLGGVVLVITGGEAL, WLGLAMPALLLNYLGQGALLL, LLAPEWALYPTIAIATAAAIV, IYLPEVNWMLGTACLALVLGF, LASAYGIAVTGTMIVTTLLFH, AWPLTSLFLTVDASFFLANVV, and DGGWFPIAAAALVFTLMSTWK.

The protein belongs to the HAK/KUP transporter (TC 2.A.72) family.

It is found in the cell inner membrane. The enzyme catalyses K(+)(in) + H(+)(in) = K(+)(out) + H(+)(out). Functionally, transport of potassium into the cell. Likely operates as a K(+):H(+) symporter. The sequence is that of Probable potassium transport system protein Kup from Anaeromyxobacter sp. (strain K).